We begin with the raw amino-acid sequence, 278 residues long: 4-hydroxy-tetrahydrodipicolinate reductase (278 aa).

NAD(+)-binding positions include 13-18 and 111-113; these read GAAGKM and GTT. His167 functions as the Proton donor/acceptor in the catalytic mechanism. His168 provides a ligand contact to (S)-2,3,4,5-tetrahydrodipicolinate. Lys171 acts as the Proton donor in catalysis. 177–178 contacts (S)-2,3,4,5-tetrahydrodipicolinate; it reads GT.

Belongs to the DapB family.

It is found in the cytoplasm. The catalysed reaction is (S)-2,3,4,5-tetrahydrodipicolinate + NAD(+) + H2O = (2S,4S)-4-hydroxy-2,3,4,5-tetrahydrodipicolinate + NADH + H(+). It carries out the reaction (S)-2,3,4,5-tetrahydrodipicolinate + NADP(+) + H2O = (2S,4S)-4-hydroxy-2,3,4,5-tetrahydrodipicolinate + NADPH + H(+). It functions in the pathway amino-acid biosynthesis; L-lysine biosynthesis via DAP pathway; (S)-tetrahydrodipicolinate from L-aspartate: step 4/4. In terms of biological role, catalyzes the conversion of 4-hydroxy-tetrahydrodipicolinate (HTPA) to tetrahydrodipicolinate. The protein is 4-hydroxy-tetrahydrodipicolinate reductase of Nostoc punctiforme (strain ATCC 29133 / PCC 73102).